A 125-amino-acid polypeptide reads, in one-letter code: Ribonuclease P protein component (125 aa).

Belongs to the RnpA family. In terms of assembly, consists of a catalytic RNA component (M1 or rnpB) and a protein subunit.

It carries out the reaction Endonucleolytic cleavage of RNA, removing 5'-extranucleotides from tRNA precursor.. RNaseP catalyzes the removal of the 5'-leader sequence from pre-tRNA to produce the mature 5'-terminus. It can also cleave other RNA substrates such as 4.5S RNA. The protein component plays an auxiliary but essential role in vivo by binding to the 5'-leader sequence and broadening the substrate specificity of the ribozyme. This is Ribonuclease P protein component from Clostridium beijerinckii (strain ATCC 51743 / NCIMB 8052) (Clostridium acetobutylicum).